Reading from the N-terminus, the 399-residue chain is Elongation factor Tu (399 aa).

The region spanning 10–209 is the tr-type G domain; the sequence is KPHVNIGTIG…AVDEYIPTPE (200 aa). The interval 19-26 is G1; the sequence is GHVDHGKT. 19–26 lines the GTP pocket; the sequence is GHVDHGKT. Residue T26 coordinates Mg(2+). The G2 stretch occupies residues 60 to 64; the sequence is GITIA. The segment at 81-84 is G3; that stretch reads DCPG. GTP contacts are provided by residues 81-85 and 136-139; these read DCPGH and NKED. The tract at residues 136–139 is G4; the sequence is NKED. A G5 region spans residues 174 to 176; that stretch reads SAL.

It belongs to the TRAFAC class translation factor GTPase superfamily. Classic translation factor GTPase family. EF-Tu/EF-1A subfamily. Monomer.

It is found in the cytoplasm. It catalyses the reaction GTP + H2O = GDP + phosphate + H(+). GTP hydrolase that promotes the GTP-dependent binding of aminoacyl-tRNA to the A-site of ribosomes during protein biosynthesis. This Nitratiruptor sp. (strain SB155-2) protein is Elongation factor Tu.